A 155-amino-acid polypeptide reads, in one-letter code: uncharacterized protein (155 aa).

4 helical membrane passes run 2-24 (TFLF…PPIF), 62-84 (AVVN…YLVL), 97-116 (VFLI…FLVV), and 131-148 (VVLL…KVFN).

The protein resides in the cell membrane. This is an uncharacterized protein from Aquifex aeolicus (strain VF5).